A 419-amino-acid chain; its full sequence is Gamma-glutamyl phosphate reductase (419 aa).

The protein belongs to the gamma-glutamyl phosphate reductase family.

The protein resides in the cytoplasm. It catalyses the reaction L-glutamate 5-semialdehyde + phosphate + NADP(+) = L-glutamyl 5-phosphate + NADPH + H(+). It participates in amino-acid biosynthesis; L-proline biosynthesis; L-glutamate 5-semialdehyde from L-glutamate: step 2/2. In terms of biological role, catalyzes the NADPH-dependent reduction of L-glutamate 5-phosphate into L-glutamate 5-semialdehyde and phosphate. The product spontaneously undergoes cyclization to form 1-pyrroline-5-carboxylate. In Bordetella avium (strain 197N), this protein is Gamma-glutamyl phosphate reductase.